The following is a 447-amino-acid chain: MSAKMLHVVMYPWFAYGHMIPFLHLSNKLAETGHKVTYILPPKALTRLQNLNLNPTQITFRTITVPRVDGLPAGAENVTDIPDITLHTHLATALDRTRPEFETIVELIKPDVIMYDVAYWVPEVAVKYGAKSVAYSVVSAASVSLSKTVVDRMTPLEKPMTEEERKKKFAQYPHLIQLYGPFGEGITMYDRLTGMLSKCDAIACRTCREIEGKYCQYLSTQYEKKVTLTGPVLPEPEVGATLEAPWSEWLSRFKLGSVLFCAFGSQFYLDKDQFQEIILGLEMTNLPFLMAVQPPKGCATIEEAYPEGFAERVKDRGVVTSQWVQQLVILAHPAVGCFVNHCAFGTMWEALLSEKQLVMIPQLGDQILNTKMLADELKVGVEVERGIGGWVSKENLCKAIKSVMDEDSEIGKDVKQSHEKWRATLSSKDLMSTYIDSFIKDLQALVE.

Histidine 18 serves as the catalytic Proton acceptor. The active-site Charge relay is the aspartate 116. UDP contacts are provided by serine 265, tryptophan 323, valine 324, histidine 341, threonine 346, and glutamate 349.

The protein belongs to the UDP-glycosyltransferase family. Mainly expressed in flowers, flower buds and young leaves, and, to a lesser extent, in old leaves, stems and roots.

It functions in the pathway secondary metabolite biosynthesis; terpenoid biosynthesis. Component of the oleanane-type triterpene saponins (e.g. saponarioside A and saponarioside B) biosynthetic pathway, leading to the production of natural products with detergent properties used as traditional sources of soap. A glycosyltransferase that mediates the conversion of QA-triF to QA-triFR via the elongation of the C-28 sugar chain with a deoxyhexose on the D-fucose moiety. The polypeptide is UDP-glucosyl transferase 79T1 (Saponaria officinalis (Common soapwort)).